A 488-amino-acid chain; its full sequence is Glutamyl-tRNA(Gln) amidotransferase subunit A (488 aa).

Catalysis depends on charge relay system residues K77 and S152. The active-site Acyl-ester intermediate is S176.

It belongs to the amidase family. GatA subfamily. In terms of assembly, heterotrimer of A, B and C subunits.

The enzyme catalyses L-glutamyl-tRNA(Gln) + L-glutamine + ATP + H2O = L-glutaminyl-tRNA(Gln) + L-glutamate + ADP + phosphate + H(+). Functionally, allows the formation of correctly charged Gln-tRNA(Gln) through the transamidation of misacylated Glu-tRNA(Gln) in organisms which lack glutaminyl-tRNA synthetase. The reaction takes place in the presence of glutamine and ATP through an activated gamma-phospho-Glu-tRNA(Gln). This Streptococcus pyogenes serotype M6 (strain ATCC BAA-946 / MGAS10394) protein is Glutamyl-tRNA(Gln) amidotransferase subunit A.